The chain runs to 232 residues: Phosphatidylserine decarboxylase proenzyme (232 aa).

The active-site Schiff-base intermediate with substrate; via pyruvic acid is the serine 190. Serine 190 carries the post-translational modification Pyruvic acid (Ser); by autocatalysis.

This sequence belongs to the phosphatidylserine decarboxylase family. PSD-A subfamily. As to quaternary structure, heterodimer of a large membrane-associated beta subunit and a small pyruvoyl-containing alpha subunit. Requires pyruvate as cofactor. Is synthesized initially as an inactive proenzyme. Formation of the active enzyme involves a self-maturation process in which the active site pyruvoyl group is generated from an internal serine residue via an autocatalytic post-translational modification. Two non-identical subunits are generated from the proenzyme in this reaction, and the pyruvate is formed at the N-terminus of the alpha chain, which is derived from the carboxyl end of the proenzyme. The post-translation cleavage follows an unusual pathway, termed non-hydrolytic serinolysis, in which the side chain hydroxyl group of the serine supplies its oxygen atom to form the C-terminus of the beta chain, while the remainder of the serine residue undergoes an oxidative deamination to produce ammonia and the pyruvoyl prosthetic group on the alpha chain.

The protein resides in the cell membrane. The catalysed reaction is a 1,2-diacyl-sn-glycero-3-phospho-L-serine + H(+) = a 1,2-diacyl-sn-glycero-3-phosphoethanolamine + CO2. Its pathway is phospholipid metabolism; phosphatidylethanolamine biosynthesis; phosphatidylethanolamine from CDP-diacylglycerol: step 2/2. Its function is as follows. Catalyzes the formation of phosphatidylethanolamine (PtdEtn) from phosphatidylserine (PtdSer). In Rhizobium etli (strain ATCC 51251 / DSM 11541 / JCM 21823 / NBRC 15573 / CFN 42), this protein is Phosphatidylserine decarboxylase proenzyme.